The sequence spans 831 residues: Prolactin receptor (831 aa).

Positions 1–23 are cleaved as a signal peptide; sequence MKQNLISSVQIILLLPLTTVGLT. The Extracellular portion of the chain corresponds to 24–438; the sequence is SQSFPGKPKI…EIPNDFRVKD (415 aa). Fibronectin type-III domains follow at residues 30–128, 129–232, 233–331, and 332–433; these read KPKI…VQPG, SPVN…SPPE, KPTI…VQPD, and PPAN…IPND. Cysteine 36 and cysteine 46 are oxidised to a cystine. N-linked (GlcNAc...) asparagine glycosylation occurs at asparagine 59. Cysteine 75 and cysteine 86 are oxidised to a cystine. N-linked (GlcNAc...) asparagine glycosylation is found at asparagine 91, asparagine 100, asparagine 112, asparagine 132, asparagine 262, asparagine 303, asparagine 315, and asparagine 335. Zn(2+)-binding residues include aspartate 414 and histidine 416. Positions 419–423 match the WSXWS motif motif; the sequence is WSEWS. Residues 439 to 459 form a helical membrane-spanning segment; that stretch reads MIVWIVLGVLSSLICLIMSWT. The Cytoplasmic portion of the chain corresponds to 460–831; that stretch reads MVLKGYRMIT…DPSSFMPSFK (372 aa). The Box 1 motif signature appears at 471–479; it reads ILPPVPGPK. 2 disordered regions span residues 527-563 and 776-831; these read HQLM…SPSL and HTPT…PSFK. The segment covering 545–554 has biased composition (basic and acidic residues); that stretch reads TLKETDRDSG. Positions 777–803 are enriched in polar residues; that stretch reads TPTSQEEPAKETSQNPQQGQVETNMSY.

The protein belongs to the type I cytokine receptor family. Type 1 subfamily.

Its subcellular location is the membrane. Functionally, this is a receptor for the anterior pituitary hormone prolactin. The protein is Prolactin receptor (PRLR) of Meleagris gallopavo (Wild turkey).